We begin with the raw amino-acid sequence, 150 residues long: Cell division protein SepF (150 aa).

It belongs to the SepF family. As to quaternary structure, homodimer. Interacts with FtsZ.

It localises to the cytoplasm. Cell division protein that is part of the divisome complex and is recruited early to the Z-ring. Probably stimulates Z-ring formation, perhaps through the cross-linking of FtsZ protofilaments. Its function overlaps with FtsA. The protein is Cell division protein SepF of Clostridium beijerinckii (strain ATCC 51743 / NCIMB 8052) (Clostridium acetobutylicum).